The primary structure comprises 429 residues: D-amino acid dehydrogenase (429 aa).

An FAD-binding site is contributed by 3-17; it reads VLILGSGVIGTTTAW.

It belongs to the DadA oxidoreductase family. Requires FAD as cofactor.

It catalyses the reaction a D-alpha-amino acid + A + H2O = a 2-oxocarboxylate + AH2 + NH4(+). The protein operates within amino-acid degradation; D-alanine degradation; NH(3) and pyruvate from D-alanine: step 1/1. Functionally, oxidative deamination of D-amino acids. This is D-amino acid dehydrogenase from Xanthomonas campestris pv. campestris (strain 8004).